The following is a 130-amino-acid chain: Protein YoeA (130 aa).

Positions 1–28 (MLYNIPCRIYILSTLSLCISGIVSTATA) are cleaved as a signal peptide. One can recognise a TBDR plug domain in the interval 51–130 (NLWESPATIQ…RCRRYSRGER (80 aa)).

The protein belongs to the TonB-dependent receptor family.

The polypeptide is Protein YoeA (yoeA) (Escherichia coli (strain K12)).